We begin with the raw amino-acid sequence, 153 residues long: Small ribosomal subunit protein eS19 (153 aa).

Belongs to the eukaryotic ribosomal protein eS19 family. Part of the 30S ribosomal subunit.

In terms of biological role, may be involved in maturation of the 30S ribosomal subunit. The protein is Small ribosomal subunit protein eS19 of Aeropyrum pernix (strain ATCC 700893 / DSM 11879 / JCM 9820 / NBRC 100138 / K1).